We begin with the raw amino-acid sequence, 246 residues long: MSIDWNWGIFLQQAPFGNTTYLGWIWSGFQVTIALSICAWIIAFLVGSFFGILRTVPNRFLSGLGTLYVELFRNVPLIVQFFTWYLVIPELLPEKIGMWFKAELDPNIQFFLSSMLCLGLFTAARVCEQVRAAIQSLPRGQKNAALAMGLTLPQAYRYVLLPNAYRVIVPPMTSEMMNLVKNSAIASTIGLVDMAAQAGKLLDYSAHAWESFTAITLAYVLINAFIMLVMTLVERKVRLPGNMGGK.

An ABC transmembrane type-1 domain is found at 29–230; sequence FQVTIALSIC…LINAFIMLVM (202 aa). Helical transmembrane passes span 33 to 53, 74 to 94, 104 to 124, 179 to 196, and 212 to 232; these read IALS…FGIL, NVPL…LLPE, LDPN…FTAA, LVKN…DMAA, and FTAI…VMTL.

It belongs to the binding-protein-dependent transport system permease family. HisMQ subfamily. As to quaternary structure, the complex is composed of two ATP-binding proteins (GltL), two transmembrane proteins (GltJ and GltK) and a solute-binding protein (GltI).

It localises to the cell inner membrane. Its function is as follows. Part of the ABC transporter complex GltIJKL involved in glutamate and aspartate uptake. Probably responsible for the translocation of the substrate across the membrane. The protein is Glutamate/aspartate import permease protein GltJ (gltJ) of Escherichia coli O6:H1 (strain CFT073 / ATCC 700928 / UPEC).